Here is a 310-residue protein sequence, read N- to C-terminus: 4-hydroxyproline 2-epimerase (310 aa).

C88 serves as the catalytic Proton acceptor. Residues 89–90, H208, and D232 contribute to the substrate site; that span reads GH. C236 acts as the Proton donor in catalysis. 237-238 contributes to the substrate binding site; that stretch reads GT.

The protein belongs to the proline racemase family.

The enzyme catalyses trans-4-hydroxy-L-proline = cis-4-hydroxy-D-proline. Catalyzes the epimerization of trans-4-hydroxy-L-proline (t4LHyp) to cis-4-hydroxy-D-proline (c4DHyp). Is likely involved in a degradation pathway that converts t4LHyp to alpha-ketoglutarate. Displays no proline racemase activity. This Acinetobacter baumannii (strain ATCC 17978 / DSM 105126 / CIP 53.77 / LMG 1025 / NCDC KC755 / 5377) protein is 4-hydroxyproline 2-epimerase.